A 374-amino-acid polypeptide reads, in one-letter code: Probable tuliposide A-converting enzyme b6, amyloplastic (374 aa).

The N-terminal 68 residues, 1–68 (MSVALFCGPP…TNSSLSPSPT (68 aa)), are a transit peptide targeting the amyloplast. Ser-226 functions as the Acyl-ester intermediate in the catalytic mechanism. Catalysis depends on charge relay system residues Asp-316 and His-348.

It belongs to the AB hydrolase superfamily. In terms of assembly, homodimer.

The protein resides in the plastid. Its subcellular location is the amyloplast. The enzyme catalyses 6-tuliposide A = tulipalin A + D-glucose. Functionally, lactone-forming carboxylesterases, specifically catalyzing intramolecular transesterification, but not hydrolysis. Involved in the biosynthesis of tulipalins, defensive chemicals that show antimicrobial activities against a broad range of strains of bacteria and fungi. Substrates are 6-tuliposide A &gt; 6-tuliposide B. The protein is Probable tuliposide A-converting enzyme b6, amyloplastic (TCEA-B6) of Tulipa gesneriana (Garden tulip).